A 368-amino-acid chain; its full sequence is 3-dehydroquinate synthase (368 aa).

NAD(+) is bound by residues 76 to 81 (DGEQYK), 110 to 114 (GVIGD), 134 to 135 (TT), lysine 147, lysine 156, and 174 to 177 (CLKT). Zn(2+)-binding residues include glutamate 189, histidine 252, and histidine 269.

It belongs to the sugar phosphate cyclases superfamily. Dehydroquinate synthase family. Requires NAD(+) as cofactor. Co(2+) serves as cofactor. Zn(2+) is required as a cofactor.

It is found in the cytoplasm. It catalyses the reaction 7-phospho-2-dehydro-3-deoxy-D-arabino-heptonate = 3-dehydroquinate + phosphate. The protein operates within metabolic intermediate biosynthesis; chorismate biosynthesis; chorismate from D-erythrose 4-phosphate and phosphoenolpyruvate: step 2/7. Catalyzes the conversion of 3-deoxy-D-arabino-heptulosonate 7-phosphate (DAHP) to dehydroquinate (DHQ). The polypeptide is 3-dehydroquinate synthase (Vibrio vulnificus (strain YJ016)).